We begin with the raw amino-acid sequence, 363 residues long: tRNA/tmRNA (uracil-C(5))-methyltransferase (363 aa).

Residues glutamine 187, tyrosine 215, asparagine 220, glutamate 236, and aspartate 296 each coordinate S-adenosyl-L-methionine. Cysteine 321 (nucleophile) is an active-site residue. Glutamate 355 serves as the catalytic Proton acceptor.

It belongs to the class I-like SAM-binding methyltransferase superfamily. RNA M5U methyltransferase family. TrmA subfamily.

It catalyses the reaction uridine(54) in tRNA + S-adenosyl-L-methionine = 5-methyluridine(54) in tRNA + S-adenosyl-L-homocysteine + H(+). It carries out the reaction uridine(341) in tmRNA + S-adenosyl-L-methionine = 5-methyluridine(341) in tmRNA + S-adenosyl-L-homocysteine + H(+). Functionally, dual-specificity methyltransferase that catalyzes the formation of 5-methyluridine at position 54 (m5U54) in all tRNAs, and that of position 341 (m5U341) in tmRNA (transfer-mRNA). In Pseudomonas aeruginosa (strain UCBPP-PA14), this protein is tRNA/tmRNA (uracil-C(5))-methyltransferase.